A 987-amino-acid chain; its full sequence is Nuclear matrix constituent protein 1b (987 aa).

The interval 1–25 is disordered; the sequence is MASPRSAGGVGGGGGGGGGSGGAAA. The span at 8 to 24 shows a compositional bias: gly residues; the sequence is GGVGGGGGGGGGSGGAA. 2 coiled-coil regions span residues 403-545 and 594-717; these read LAEL…ERRA and LSKI…DREA. Basic and acidic residues-rich tracts occupy residues 752–764 and 898–908; these read SDIN…HDNS and CKEHEYGDKGP. Disordered regions lie at residues 752–775 and 887–987; these read SDIN…FGRK and HDEA…FLIT. Positions 944–954 are enriched in polar residues; sequence ATVSATETSNV. Residues 956–973 are compositionally biased toward acidic residues; that stretch reads GPEDNNDSDEEDEEEEEE.

Belongs to the CRWN family. In terms of assembly, interacts with SWI3C.

Its subcellular location is the nucleus matrix. The protein localises to the nucleus lamina. Architectural component of nuclear structure that plays different roles in controlling nuclear size and morphology. Involved in the modification of chromatin accessibility by interacting with SWI3C, a component of the chromatin-remodeling complex, to thus reduce the suppression effect of the complex. Acts as positive regulator of drought resistance and modulates root growth. Positively regulates the expression of genes related to root growth and drought resistance. This chain is Nuclear matrix constituent protein 1b, found in Oryza sativa subsp. japonica (Rice).